Reading from the N-terminus, the 9702-residue chain is Nonribosomal peptide synthetase ungA (9702 aa).

Residues 248–647 (EQAQLRPHAP…ARKDTQVKIR (400 aa)) form an adenylation 1 region. Residues 775 to 852 (APQTEMEYRL…MARAAQEKQT (78 aa)) enclose the Carrier 1 domain. At serine 812 the chain carries O-(pantetheine 4'-phosphoryl)serine. Residues 891-1288 (DILPCTPLQE…EAVLRHVCSQ (398 aa)) form a condensation 1 region. The segment at 1330–1730 (QRTQQQPDAP…GRKDTQVKIR (401 aa)) is adenylation 2. The Carrier 2 domain maps to 1857–1933 (LPQSPMEKSL…RLARREIQTD (77 aa)). Serine 1894 is modified (O-(pantetheine 4'-phosphoryl)serine). Positions 1946-2374 (PFALSPIQQF…ERALEGTAVQ (429 aa)) are epimerization 1. Positions 2414–2842 (EDIYPCSPLQ…LDTAILSPQD (429 aa)) are condensation 2. The tract at residues 2868–3267 (QVERQPDALA…GRKDTQVKIR (400 aa)) is adenylation 3. Residues 3397 to 3473 (APTTEMERHL…EMSQVAKLGS (77 aa)) enclose the Carrier 3 domain. The residue at position 3434 (serine 3434) is an O-(pantetheine 4'-phosphoryl)serine. A condensation 3 region spans residues 3512–3920 (EDVFPCTPLQ…LLCDASHHQS (409 aa)). An adenylation 4 region spans residues 3957 to 4361 (KQTQRRSAAQ…GRKDAQVKIR (405 aa)). Residues 4491 to 4568 (PPTTDLERQI…LALSVSAAVD (78 aa)) form the Carrier 4 domain. Serine 4528 bears the O-(pantetheine 4'-phosphoryl)serine mark. Residues 4583–5013 (ALSPIQQMFA…QAAAQALPLL (431 aa)) are epimerization 2. Residues 5049-5474 (VEDIYPCSPL…ANIISHQDLE (426 aa)) are condensation 4. An adenylation 5 region spans residues 5496 to 5899 (MQQAESQPGA…GRKDNQVKIH (404 aa)). Residues 6033-6110 (TASSPEELEL…LVSHAQGNTA (78 aa)) form the Carrier 5 domain. Position 6070 is an O-(pantetheine 4'-phosphoryl)serine (serine 6070). The interval 6127-6551 (ELSPIQQLFF…CKSSLEAAAA (425 aa)) is epimerization 3. Residues 6593–6935 (VEDIYPCAPI…TGISVQGGAA (343 aa)) are condensation 5. Residues 7047–7447 (KRPDAPAIDA…GRRDNQVKVR (401 aa)) form an adenylation 6 region. A Carrier 6 domain is found at 7575-7655 (GPQTEVERLL…RSARTVQGHV (81 aa)). Serine 7613 is subject to O-(pantetheine 4'-phosphoryl)serine. Positions 7670-8106 (DLAPVQQMFA…LVTASELLMQ (437 aa)) are epimerization 4. The tract at residues 8144 to 8588 (VEDIYPCSPI…EVDLSTDHDQ (445 aa)) is condensation 6. Positions 8612–9025 (NTVQKQPHST…GRKDSQVKIR (414 aa)) are adenylation 7. One can recognise a Carrier 7 domain in the interval 9158–9236 (SPTAPMERRL…LALLVREGDA (79 aa)). Serine 9196 is modified (O-(pantetheine 4'-phosphoryl)serine). A condensation 7 region spans residues 9282–9629 (DVYPTTDLQN…DNLEHDPGTA (348 aa)).

It belongs to the NRP synthetase family.

It participates in secondary metabolite biosynthesis. Functionally, nonribosomal peptide synthetase; part of the gene cluster that mediates the biosynthesis of the unguisins, gamma-aminobutyric acid (GABA)-containing fungal cyclic heptapeptides with the amino acid sequence cyclo-(D-Ala1-D-Val2-L-Phe3-D-Val4-D-Ala5-D-Trp6-GABA7) for unguisin A and cyclo-(D-Ala1-D-Val2-L-Leu3-D-Val4-D-Ala5-D-Trp6-GABA7) for unguisin B. UngA is the main enzyme within the cluster which condenses the 7 residues using its respective 7 modules. The terminal condensation domain (Ct) is involved in cyclization with D-alanine and thereby releasing of unguisins A and B. The alanine racemase ungC provides D-alanine, which is then accepted by the first adenylation domain of ungA. Finally, the hydrolase ungD catalyzes the hydrolysis between the D-tryptophan and GABA residues of unguisins A and B to produce the corresponding linear peptides. The chain is Nonribosomal peptide synthetase ungA from Aspergillus violaceofuscus (strain CBS 115571).